The following is an 891-amino-acid chain: Aconitate hydratase A (891 aa).

Positions 435, 501, and 504 each coordinate [4Fe-4S] cluster.

It belongs to the aconitase/IPM isomerase family. Monomer. [4Fe-4S] cluster is required as a cofactor.

The catalysed reaction is citrate = D-threo-isocitrate. Its pathway is carbohydrate metabolism; tricarboxylic acid cycle; isocitrate from oxaloacetate: step 2/2. In terms of biological role, catalyzes the reversible isomerization of citrate to isocitrate via cis-aconitate. The apo form of AcnA functions as a RNA-binding regulatory protein which plays a role as a maintenance or survival enzyme during nutritional or oxidative stress. During oxidative stress inactive AcnA apo-enzyme without iron sulfur clusters binds the acnA mRNA 3' UTRs (untranslated regions), stabilizes acnA mRNA and increases AcnA synthesis, thus mediating a post-transcriptional positive autoregulatory switch. AcnA also enhances the stability of the sodA transcript. The polypeptide is Aconitate hydratase A (Escherichia coli (strain K12)).